The following is a 179-amino-acid chain: Large ribosomal subunit protein uL6 (179 aa).

The tract at residues 151–179 (RKPEPYKGKGIKYDNEQIRRKAGKSGGKK) is disordered. Residues 152-169 (KPEPYKGKGIKYDNEQIR) show a composition bias toward basic and acidic residues. Residues 170–179 (RKAGKSGGKK) are compositionally biased toward basic residues.

This sequence belongs to the universal ribosomal protein uL6 family. Part of the 50S ribosomal subunit.

In terms of biological role, this protein binds to the 23S rRNA, and is important in its secondary structure. It is located near the subunit interface in the base of the L7/L12 stalk, and near the tRNA binding site of the peptidyltransferase center. In Nitratidesulfovibrio vulgaris (strain ATCC 29579 / DSM 644 / CCUG 34227 / NCIMB 8303 / VKM B-1760 / Hildenborough) (Desulfovibrio vulgaris), this protein is Large ribosomal subunit protein uL6.